The chain runs to 293 residues: Aspartate carbamoyltransferase catalytic subunit (293 aa).

Arg50 and Thr51 together coordinate carbamoyl phosphate. Lys78 is a binding site for L-aspartate. The carbamoyl phosphate site is built by Arg100, His127, and Gln130. Residues Arg160 and Arg210 each contribute to the L-aspartate site. Residues Ala253 and Pro254 each contribute to the carbamoyl phosphate site.

Belongs to the aspartate/ornithine carbamoyltransferase superfamily. ATCase family. Heterododecamer (2C3:3R2) of six catalytic PyrB chains organized as two trimers (C3), and six regulatory PyrI chains organized as three dimers (R2).

It carries out the reaction carbamoyl phosphate + L-aspartate = N-carbamoyl-L-aspartate + phosphate + H(+). It participates in pyrimidine metabolism; UMP biosynthesis via de novo pathway; (S)-dihydroorotate from bicarbonate: step 2/3. Functionally, catalyzes the condensation of carbamoyl phosphate and aspartate to form carbamoyl aspartate and inorganic phosphate, the committed step in the de novo pyrimidine nucleotide biosynthesis pathway. This chain is Aspartate carbamoyltransferase catalytic subunit, found in Staphylococcus epidermidis (strain ATCC 12228 / FDA PCI 1200).